We begin with the raw amino-acid sequence, 187 residues long: UPF0669 protein C6orf120 homolog (187 aa).

The first 23 residues, 1-23 (MVEYWKRNFFMVLVLQAFYLANC), serve as a signal peptide directing secretion. Asn47 carries an N-linked (GlcNAc...) asparagine glycan.

The protein belongs to the UPF0669 family.

The protein localises to the secreted. In Xenopus tropicalis (Western clawed frog), this protein is UPF0669 protein C6orf120 homolog.